The sequence spans 309 residues: Carbamate kinase-like protein (309 aa).

Residues 125-144 (NKPVGPFYNTEETARSANPN) are disordered.

This sequence belongs to the carbamate kinase family.

This is Carbamate kinase-like protein from Mycoplasma pneumoniae (strain ATCC 29342 / M129 / Subtype 1) (Mycoplasmoides pneumoniae).